The sequence spans 670 residues: Proline-rich receptor-like protein kinase PERK5 (670 aa).

The segment at 1–181 is disordered; it reads MADSPVDSSP…SGDSDSSSGN (181 aa). At 1–186 the chain is on the extracellular side; that stretch reads MADSPVDSSP…SSSGNHPQAN (186 aa). A compositionally biased stretch (low complexity) spans 14-31; the sequence is TSNGTPPSNGTSPSNESS. N-linked (GlcNAc...) asparagine glycosylation is found at Asn22 and Asn28. Pro residues-rich tracts occupy residues 32-62 and 84-109; these read PPTP…PAPP and PQTP…PPQT. N-linked (GlcNAc...) asparagine glycosylation occurs at Asn130. Positions 132–141 are enriched in low complexity; that stretch reads TNGGNNNRDG. N-linked (GlcNAc...) asparagine glycosylation is present at Asn151. Residues 167-181 are compositionally biased toward low complexity; it reads SPPQNSGDSDSSSGN. A helical membrane pass occupies residues 187–207; that stretch reads IGLIIGVLVGAGLLLLLAVCI. Topologically, residues 208 to 670 are cytoplasmic; it reads CICCNRKKKK…RGSMKRNPQL (463 aa). Position 301 is a phosphothreonine (Thr301). Residues 312-590 form the Protein kinase domain; sequence FAQSNLLGQG…VRALEGDMSM (279 aa). Residues 318–326 and Lys340 contribute to the ATP site; that span reads LGQGGFGYV. A Phosphotyrosine modification is found at Tyr385. The active-site Proton acceptor is Asp436. A Phosphoserine modification is found at Ser469. A phosphothreonine mark is found at Thr470 and Thr475. Tyr483 carries the post-translational modification Phosphotyrosine. Disordered stretches follow at residues 589–613 and 635–670; these read SMDD…VSSE and EYQS…NPQL. Over residues 599–613 the composition is skewed to polar residues; that stretch reads PGQSTYLSPGSVSSE.

It belongs to the protein kinase superfamily. Ser/Thr protein kinase family. Mostly expressed in flower buds.

The protein localises to the cell membrane. The enzyme catalyses L-seryl-[protein] + ATP = O-phospho-L-seryl-[protein] + ADP + H(+). The catalysed reaction is L-threonyl-[protein] + ATP = O-phospho-L-threonyl-[protein] + ADP + H(+). The chain is Proline-rich receptor-like protein kinase PERK5 (PERK5) from Arabidopsis thaliana (Mouse-ear cress).